The chain runs to 209 residues: Probable peptide export ATP-binding protein YydI (209 aa).

In terms of domain architecture, ABC transporter spans 1 to 207 (MNIANYTLKV…SVDKLIEVYI (207 aa)). 33–40 (GKNGVGKS) lines the ATP pocket.

The protein belongs to the ABC transporter superfamily. The complex is composed of two ATP-binding proteins (YydI), two transmembrane proteins (YydJ).

Suggested to be part of an ABC transporter complex YydIJ involved in export of the modified peptide YydF. Responsible for energy coupling to the transport system. This is Probable peptide export ATP-binding protein YydI (yydI) from Bacillus subtilis (strain 168).